A 300-amino-acid chain; its full sequence is 11-beta-hydroxysteroid dehydrogenase 1 (300 aa).

Residues Met1 to Tyr7 are Cytoplasmic-facing. A helical; Signal-anchor for type II membrane protein transmembrane segment spans residues Leu8–Asn24. The Lumenal segment spans residues Glu25–Ala300. Residues Gly41–Ser67, Ser92–Met93, and Asn119–Tyr123 each bind NADP(+). Ser170 provides a ligand contact to substrate. Tyr183 serves as the catalytic Proton acceptor. Residue Tyr183 to Lys187 coordinates NADP(+). The N-linked (GlcNAc...) asparagine glycan is linked to Asn207. Ile218–Thr222 contributes to the NADP(+) binding site.

This sequence belongs to the short-chain dehydrogenases/reductases (SDR) family. Homodimer. As to expression, widely expressed in all peripheral tissues, with highest expression in liver, followed by kidney and lung, and very low expression in heart, lung, spleen, stomach, small intestine, colon, skin, skeletal muscle, and ovary.

It localises to the endoplasmic reticulum membrane. The catalysed reaction is an 11beta-hydroxysteroid + NADP(+) = an 11-oxosteroid + NADPH + H(+). The enzyme catalyses cortisone + NADPH + H(+) = cortisol + NADP(+). It catalyses the reaction corticosterone + NADP(+) = 11-dehydrocorticosterone + NADPH + H(+). It carries out the reaction a 7beta-hydroxysteroid + NADP(+) = a 7-oxosteroid + NADPH + H(+). The catalysed reaction is 7-oxocholesterol + NADPH + H(+) = 7beta-hydroxycholesterol + NADP(+). The enzyme catalyses chenodeoxycholate + NADP(+) = 7-oxolithocholate + NADPH + H(+). It catalyses the reaction 7-oxolithocholate + NADPH + H(+) = ursodeoxycholate + NADP(+). It carries out the reaction glycochenodeoxycholate + NADP(+) = 7-oxoglycolithocholate + NADPH + H(+). The catalysed reaction is taurochenodeoxycholate + NADP(+) = 7-oxotaurolithocholate + NADPH + H(+). The enzyme catalyses tauroursodeoxycholate + NADP(+) = 7-oxotaurolithocholate + NADPH + H(+). It catalyses the reaction glycoursodeoxycholate + NADP(+) = 7-oxoglycolithocholate + NADPH + H(+). It carries out the reaction 7-oxopregnenolone + NADPH + H(+) = 7beta-hydroxypregnenolone + NADP(+). The catalysed reaction is 3beta,7alpha-dihydroxyandrost-5-en-17-one + NADP(+) = 3beta-hydroxy-5-androstene-7,17-dione + NADPH + H(+). The enzyme catalyses 3beta-hydroxy-5-androstene-7,17-dione + NADPH + H(+) = 3beta,7beta-dihydroxyandrost-5-en-17-one + NADP(+). It catalyses the reaction 3beta-hydroxy-5alpha-androstane-7,17-dione + NADPH + H(+) = 3beta,7beta-dihydroxy-5alpha-androstan-17-one + NADP(+). Controls the reversible conversion of biologically active glucocorticoids such as cortisone to cortisol, and 11-dehydrocorticosterone to corticosterone in the presence of NADP(H). Participates in the corticosteroid receptor-mediated anti-inflammatory response, as well as metabolic and homeostatic processes. Bidirectional in vitro, predominantly functions as a reductase in vivo, thereby increasing the concentration of active glucocorticoids. It has broad substrate specificity, besides glucocorticoids, it accepts other steroid and sterol substrates. Interconverts 7-oxo- and 7-hydroxy-neurosteroids such as 7-oxopregnenolone and 7beta-hydroxypregnenolone, 7-oxodehydroepiandrosterone (3beta-hydroxy-5-androstene-7,17-dione) and 7beta-hydroxydehydroepiandrosterone (3beta,7beta-dihydroxyandrost-5-en-17-one), among others. Catalyzes the stereo-specific conversion of the major dietary oxysterol, 7-ketocholesterol (7-oxocholesterol), into the more polar 7-beta-hydroxycholesterol metabolite. 7-oxocholesterol is one of the most important oxysterols, it participates in several events such as induction of apoptosis, accumulation in atherosclerotic lesions, lipid peroxidation, and induction of foam cell formation. Mediates the 7-oxo reduction of 7-oxolithocholate mainly to chenodeoxycholate, and to a lesser extent to ursodeoxycholate, both in its free form and when conjugated to glycine or taurine, providing a link between glucocorticoid activation and bile acid metabolism. Catalyzes the synthesis of 7-beta-25-dihydroxycholesterol from 7-oxo-25-hydroxycholesterol in vitro, which acts as a ligand for the G-protein-coupled receptor (GPCR) Epstein-Barr virus-induced gene 2 (EBI2) and may thereby regulate immune cell migration. The chain is 11-beta-hydroxysteroid dehydrogenase 1 (HSD11B1) from Cavia porcellus (Guinea pig).